Reading from the N-terminus, the 215-residue chain is Large ribosomal subunit protein uL3 (215 aa).

Q156 carries the post-translational modification N5-methylglutamine.

Belongs to the universal ribosomal protein uL3 family. Part of the 50S ribosomal subunit. Forms a cluster with proteins L14 and L19. In terms of processing, methylated by PrmB.

Its function is as follows. One of the primary rRNA binding proteins, it binds directly near the 3'-end of the 23S rRNA, where it nucleates assembly of the 50S subunit. This is Large ribosomal subunit protein uL3 from Xylella fastidiosa (strain M23).